The primary structure comprises 318 residues: Ribonuclease Z (318 aa).

Zn(2+) is bound by residues His62, His64, Asp66, His67, His139, Asp210, and His268. Residue Asp66 is the Proton acceptor of the active site.

The protein belongs to the RNase Z family. As to quaternary structure, homodimer. Zn(2+) is required as a cofactor.

The catalysed reaction is Endonucleolytic cleavage of RNA, removing extra 3' nucleotides from tRNA precursor, generating 3' termini of tRNAs. A 3'-hydroxy group is left at the tRNA terminus and a 5'-phosphoryl group is left at the trailer molecule.. In terms of biological role, zinc phosphodiesterase, which displays some tRNA 3'-processing endonuclease activity. Probably involved in tRNA maturation, by removing a 3'-trailer from precursor tRNA. The chain is Ribonuclease Z from Microcystis aeruginosa (strain NIES-843 / IAM M-2473).